We begin with the raw amino-acid sequence, 403 residues long: Alkaline protease 1 (403 aa).

A signal peptide spans methionine 1–alanine 21. Residues proline 22–threonine 125 constitute a propeptide that is removed on maturation. In terms of domain architecture, Inhibitor I9 spans lysine 36 to leucine 120. Residues proline 130–alanine 403 enclose the Peptidase S8 domain. Active-site charge relay system residues include aspartate 162 and histidine 193. Asparagine 253 and asparagine 307 each carry an N-linked (GlcNAc...) asparagine glycan. The Charge relay system role is filled by serine 349. Asparagine 367 is a glycosylation site (N-linked (GlcNAc...) asparagine).

Belongs to the peptidase S8 family.

It is found in the secreted. The catalysed reaction is Hydrolysis of proteins with broad specificity, and of Bz-Arg-OEt &gt; Ac-Tyr-OEt. Does not hydrolyze peptide amides.. In terms of biological role, secreted alkaline protease that allows assimilation of proteinaceous substrates. Acts as a significant virulence factor in invasive aspergillosis. Involved in immune evasion from the human and mice complement systems during infection. Efficiently cleaves important components of the complement cascade such as such as C3, C4, C5, and C1q, as well as IgG, which leads to down-regulation of complement activation at the hyphal surface. The chain is Alkaline protease 1 (alp1) from Aspergillus fumigatus (strain CBS 144.89 / FGSC A1163 / CEA10) (Neosartorya fumigata).